The following is a 386-amino-acid chain: Pepsin A (386 aa).

Positions 1 to 15 are cleaved as a signal peptide; sequence MKWLLLLSLVALSEC. Residues 16 to 60 constitute a propeptide, activation peptide; sequence YIYKVPLVKKKSLRKNLMEQGLLQDYLKTHSINPASKYLKEAASM. The Peptidase A1 domain occupies 74-383; the sequence is YFGTIGIGTP…DRGNNQVGLA (310 aa). Aspartate 92 is a catalytic residue. 2 disulfides stabilise this stretch: cysteine 105-cysteine 110 and cysteine 266-cysteine 270. Aspartate 275 is a catalytic residue. A disulfide bridge connects residues cysteine 309 and cysteine 342.

It belongs to the peptidase A1 family.

The protein resides in the secreted. It catalyses the reaction Preferential cleavage: hydrophobic, preferably aromatic, residues in P1 and P1' positions. Cleaves 1-Phe-|-Val-2, 4-Gln-|-His-5, 13-Glu-|-Ala-14, 14-Ala-|-Leu-15, 15-Leu-|-Tyr-16, 16-Tyr-|-Leu-17, 23-Gly-|-Phe-24, 24-Phe-|-Phe-25 and 25-Phe-|-Tyr-26 bonds in the B chain of insulin.. In terms of biological role, shows particularly broad specificity; although bonds involving phenylalanine and leucine are preferred, many others are also cleaved to some extent. This Rhinolophus ferrumequinum (Greater horseshoe bat) protein is Pepsin A (PGA).